Here is a 264-residue protein sequence, read N- to C-terminus: S-adenosylmethionine decarboxylase proenzyme (264 aa).

Residue Ser-112 is the Schiff-base intermediate with substrate; via pyruvic acid of the active site. Position 112 is a pyruvic acid (Ser); by autocatalysis (Ser-112). The active-site Proton acceptor; for processing activity is His-117. Catalysis depends on Cys-140, which acts as the Proton donor; for catalytic activity.

It belongs to the prokaryotic AdoMetDC family. Type 2 subfamily. In terms of assembly, heterooctamer of four alpha and four beta chains arranged as a tetramer of alpha/beta heterodimers. It depends on pyruvate as a cofactor. In terms of processing, is synthesized initially as an inactive proenzyme. Formation of the active enzyme involves a self-maturation process in which the active site pyruvoyl group is generated from an internal serine residue via an autocatalytic post-translational modification. Two non-identical subunits are generated from the proenzyme in this reaction, and the pyruvate is formed at the N-terminus of the alpha chain, which is derived from the carboxyl end of the proenzyme. The post-translation cleavage follows an unusual pathway, termed non-hydrolytic serinolysis, in which the side chain hydroxyl group of the serine supplies its oxygen atom to form the C-terminus of the beta chain, while the remainder of the serine residue undergoes an oxidative deamination to produce ammonia and the pyruvoyl group blocking the N-terminus of the alpha chain.

The catalysed reaction is S-adenosyl-L-methionine + H(+) = S-adenosyl 3-(methylsulfanyl)propylamine + CO2. It functions in the pathway amine and polyamine biosynthesis; S-adenosylmethioninamine biosynthesis; S-adenosylmethioninamine from S-adenosyl-L-methionine: step 1/1. Functionally, catalyzes the decarboxylation of S-adenosylmethionine to S-adenosylmethioninamine (dcAdoMet), the propylamine donor required for the synthesis of the polyamines spermine and spermidine from the diamine putrescine. The protein is S-adenosylmethionine decarboxylase proenzyme of Citrobacter koseri (strain ATCC BAA-895 / CDC 4225-83 / SGSC4696).